The following is a 399-amino-acid chain: Elongation factor Tu (399 aa).

One can recognise a tr-type G domain in the interval 10-204 (KPHVNIGTIG…AVDANIPEPV (195 aa)). The interval 19 to 26 (GHVDHGKT) is G1. Residue 19–26 (GHVDHGKT) participates in GTP binding. Residue threonine 26 participates in Mg(2+) binding. Residues 60 to 64 (GITIN) are G2. A G3 region spans residues 81 to 84 (DCPG). GTP is bound by residues 81-85 (DCPGH) and 136-139 (NKCD). A G4 region spans residues 136 to 139 (NKCD). Positions 174-176 (SGL) are G5.

This sequence belongs to the TRAFAC class translation factor GTPase superfamily. Classic translation factor GTPase family. EF-Tu/EF-1A subfamily. As to quaternary structure, monomer.

It localises to the cytoplasm. The enzyme catalyses GTP + H2O = GDP + phosphate + H(+). GTP hydrolase that promotes the GTP-dependent binding of aminoacyl-tRNA to the A-site of ribosomes during protein biosynthesis. The protein is Elongation factor Tu of Synechococcus sp. (strain RCC307).